The following is a 158-amino-acid chain: Endoribonuclease YbeY (158 aa).

Residues His124, His128, and His134 each coordinate Zn(2+).

The protein belongs to the endoribonuclease YbeY family. Zn(2+) serves as cofactor.

The protein localises to the cytoplasm. In terms of biological role, single strand-specific metallo-endoribonuclease involved in late-stage 70S ribosome quality control and in maturation of the 3' terminus of the 16S rRNA. The chain is Endoribonuclease YbeY from Caldicellulosiruptor bescii (strain ATCC BAA-1888 / DSM 6725 / KCTC 15123 / Z-1320) (Anaerocellum thermophilum).